We begin with the raw amino-acid sequence, 370 residues long: Protein PAM71, chloroplastic (370 aa).

The tract at residues 1–38 (MLSLNLSESLRIPFQNPRPPKSDFSSTSSSPSSSSRRC) is disordered. The transit peptide at 1–73 (MLSLNLSESL…RNESQQLGFR (73 aa)) directs the protein to the chloroplast. The span at 22 to 38 (SDFSSTSSSPSSSSRRC) shows a compositional bias: low complexity. Topologically, residues 74–113 (CFQRNDAACYLEKAESEEHDRNLDVLVESSIAHSRREIQR) are stromal. A helical transmembrane segment spans residues 114 to 134 (VLMFLAVSGSVALLGTDPAFA). Topologically, residues 135-161 (ASSIPNVTQSLVTSFGDLGDISSGFAS) are lumenal, thylakoid. A helical transmembrane segment spans residues 162–182 (AFLLIFFSELGDKTFFIAALL). Over 183–188 (AARNSA) the chain is Stromal. The helical transmembrane segment at 189–209 (ATVFVGTFGALGIMTIISVVL) threads the bilayer. Topologically, residues 210–228 (GRTFHYVDEVLPFRFGGTD) are lumenal, thylakoid. A helical transmembrane segment spans residues 229–249 (LPIDDIAAVCLLVYFGVSTLL). Residues 250-275 (DAVSDEGKADEEQKEAELAVSELSGN) are Stromal-facing. A helical transmembrane segment spans residues 276 to 296 (GAGIVAAANTIISTFALVFVA). Residues 297–315 (EWGDKSFFSTIALAAASSP) are Lumenal, thylakoid-facing. Residues 316–336 (LGVIAGALAGHGAATLLAVLG) form a helical membrane-spanning segment. Residues 337-348 (GSLLGNFLSEKA) lie on the Stromal side of the membrane. The helical transmembrane segment at 349–369 (IAYVGGVLFLVFAAVTVAEIV) threads the bilayer. Position 370 (Thr370) is a topological domain, lumenal, thylakoid.

Belongs to the GDT1 family. In terms of assembly, homodimer.

Its subcellular location is the plastid. It is found in the chloroplast membrane. The protein resides in the thylakoid. Mn(2+)/H(+) exchanger, which transport Mn(2+)from the chloroplast stroma into the acidic thylakoid lumen. Might be a chloroplast-localized Ca(2+)/H(+) antiporter. Regulates Ca(2+), Mn(2+) and pH homeostasis. Required for chloroplast development. In Arabidopsis thaliana (Mouse-ear cress), this protein is Protein PAM71, chloroplastic.